Here is a 136-residue protein sequence, read N- to C-terminus: Probable acyltransferase SID5 (136 aa).

It participates in siderophore biosynthesis. Probable acyltransferase; part of the gene cluster that mediates the biosynthesis of hydroxamate-containing siderophores that play a critical role in virulence via intracellular iron acquisition during macrophage infection. This Ajellomyces capsulatus (Darling's disease fungus) protein is Probable acyltransferase SID5.